The primary structure comprises 180 residues: MKLDKYAVGQRYAKALFSLAEQEQQFESIHDEIQALETIFNDNPKLGTVLTDTTLSGLKQRNLLESLSNDFSTLMQHFLSLVFDYQRMAEMPYIIAAYEDLYDQHKGIAHAKVTSAVALDDDQLAKISQSFAKREGLNEVLIESVVDPDIIGGIVLESNHKVIDGSVKHGLDQIKSLLLK.

It belongs to the ATPase delta chain family. F-type ATPases have 2 components, F(1) - the catalytic core - and F(0) - the membrane proton channel. F(1) has five subunits: alpha(3), beta(3), gamma(1), delta(1), epsilon(1). F(0) has three main subunits: a(1), b(2) and c(10-14). The alpha and beta chains form an alternating ring which encloses part of the gamma chain. F(1) is attached to F(0) by a central stalk formed by the gamma and epsilon chains, while a peripheral stalk is formed by the delta and b chains.

It localises to the cell membrane. Functionally, f(1)F(0) ATP synthase produces ATP from ADP in the presence of a proton or sodium gradient. F-type ATPases consist of two structural domains, F(1) containing the extramembraneous catalytic core and F(0) containing the membrane proton channel, linked together by a central stalk and a peripheral stalk. During catalysis, ATP synthesis in the catalytic domain of F(1) is coupled via a rotary mechanism of the central stalk subunits to proton translocation. This protein is part of the stalk that links CF(0) to CF(1). It either transmits conformational changes from CF(0) to CF(1) or is implicated in proton conduction. The sequence is that of ATP synthase subunit delta from Latilactobacillus sakei subsp. sakei (strain 23K) (Lactobacillus sakei subsp. sakei).